The chain runs to 143 residues: Large ribosomal subunit protein uL13 (143 aa).

This sequence belongs to the universal ribosomal protein uL13 family. As to quaternary structure, part of the 50S ribosomal subunit.

Functionally, this protein is one of the early assembly proteins of the 50S ribosomal subunit, although it is not seen to bind rRNA by itself. It is important during the early stages of 50S assembly. This is Large ribosomal subunit protein uL13 from Desulfitobacterium hafniense (strain Y51).